We begin with the raw amino-acid sequence, 411 residues long: UPF0761 membrane protein PLES_43641 (411 aa).

The next 6 helical transmembrane spans lie at 36 to 56, 92 to 112, 132 to 152, 174 to 194, 207 to 229, and 244 to 264; these read LFAVVPMMTVMFSMLSLIPAF, HLTWVGVVFLAVTAFTMLVTI, FLLYWAILSLGPLLLGAGFAV, LLGLMPLAFSVAAFTLLYSAV, GGVFTAVLFEAAKTLFGLYVSLF, and IFLLWIYLSWMIVLFGAVLVC.

Belongs to the UPF0761 family.

Its subcellular location is the cell inner membrane. The polypeptide is UPF0761 membrane protein PLES_43641 (Pseudomonas aeruginosa (strain LESB58)).